The sequence spans 147 residues: Chorion class B protein B.L1 (147 aa).

The interval 1-38 (IGCGRGCGGRGYGGLGYGGLGYGGLGYGGLGGGCGRGF) is left arm. 4 consecutive repeat copies span residues 11 to 15 (GYGGL), 16 to 20 (GYGGL), 21 to 25 (GYGGL), and 26 to 30 (GYGGL). Positions 11-30 (GYGGLGYGGLGYGGLGYGGL) are 4 X 5 AA tandem repeats of G-Y-G-G-L. The interval 39 to 107 (SGGGLPVATA…GNGAVGITRE (69 aa)) is central domain. The tract at residues 108–147 (GGLGYGAGYGGGYGLGYGGYGGGYGLGYGGYGGCGCGCGY) is right arm (Gly-rich tandem repeats).

It belongs to the chorion protein family.

In terms of biological role, this protein is one of many from the eggshell of the silk moth. This chain is Chorion class B protein B.L1, found in Bombyx mori (Silk moth).